The sequence spans 156 residues: Ribosomal RNA large subunit methyltransferase H (156 aa).

S-adenosyl-L-methionine is bound by residues Leu73, Gly104, and 123 to 128 (LSPLTL).

This sequence belongs to the RNA methyltransferase RlmH family. Homodimer.

The protein resides in the cytoplasm. It catalyses the reaction pseudouridine(1915) in 23S rRNA + S-adenosyl-L-methionine = N(3)-methylpseudouridine(1915) in 23S rRNA + S-adenosyl-L-homocysteine + H(+). Its function is as follows. Specifically methylates the pseudouridine at position 1915 (m3Psi1915) in 23S rRNA. This Pectobacterium carotovorum subsp. carotovorum (strain PC1) protein is Ribosomal RNA large subunit methyltransferase H.